The chain runs to 316 residues: tRNA dimethylallyltransferase (316 aa).

14-21 (GPTAVGKT) is an ATP binding site. Residue 16-21 (TAVGKT) coordinates substrate. The tract at residues 39–42 (DSMQ) is interaction with substrate tRNA.

It belongs to the IPP transferase family. In terms of assembly, monomer. The cofactor is Mg(2+).

The catalysed reaction is adenosine(37) in tRNA + dimethylallyl diphosphate = N(6)-dimethylallyladenosine(37) in tRNA + diphosphate. In terms of biological role, catalyzes the transfer of a dimethylallyl group onto the adenine at position 37 in tRNAs that read codons beginning with uridine, leading to the formation of N6-(dimethylallyl)adenosine (i(6)A). This is tRNA dimethylallyltransferase from Bacillus cytotoxicus (strain DSM 22905 / CIP 110041 / 391-98 / NVH 391-98).